A 44-amino-acid polypeptide reads, in one-letter code: uncharacterized protein (44 aa).

The helical transmembrane segment at 4–24 threads the bilayer; that stretch reads ISSILIRGGGVLIVVILLLWI.

The protein localises to the membrane. This is an uncharacterized protein from Ornithodoros (relapsing fever ticks).